The primary structure comprises 541 residues: Putative acyl-CoA dehydrogenase AidB (541 aa).

FAD contacts are provided by residues 182–191, Thr185, Ser191, 216–218, Ser218, 423–433, and Asn429; these read MGMTEKQGGS, FFS, and IWEGSGNIMCL. The segment at 445–541 is dsDNA-binding; that stretch reads VYDLLSEAFV…LLRATGGVCV (97 aa).

The protein belongs to the acyl-CoA dehydrogenase family. As to quaternary structure, homotetramer. Dimer of dimers. The cofactor is FAD.

It localises to the cytoplasm. Functionally, part of the adaptive DNA-repair response to alkylating agents. Could prevent alkylation damage by protecting DNA and destroying alkylating agents that have yet to reach their DNA target. Binds to double-stranded DNA with a preference for a DNA region that includes its own promoter. Shows weak isovaleryl-CoA dehydrogenase activity in vitro. The sequence is that of Putative acyl-CoA dehydrogenase AidB (aidB) from Escherichia coli (strain K12).